The chain runs to 75 residues: Metallothionein-like protein 1 (75 aa).

It belongs to the metallothionein superfamily. Type 15 family.

Functionally, metallothioneins have a high content of cysteine residues that bind various heavy metals. This chain is Metallothionein-like protein 1, found in Cicer arietinum (Chickpea).